The following is a 490-amino-acid chain: Glutamate--tRNA ligase (490 aa).

The 'HIGH' region motif lies at 9–19 (PSPTGLQHIGG). Positions 251 to 255 (KLSKR) match the 'KMSKS' region motif. ATP is bound at residue lysine 254.

It belongs to the class-I aminoacyl-tRNA synthetase family. Glutamate--tRNA ligase type 1 subfamily. As to quaternary structure, monomer.

Its subcellular location is the cytoplasm. It catalyses the reaction tRNA(Glu) + L-glutamate + ATP = L-glutamyl-tRNA(Glu) + AMP + diphosphate. Catalyzes the attachment of glutamate to tRNA(Glu) in a two-step reaction: glutamate is first activated by ATP to form Glu-AMP and then transferred to the acceptor end of tRNA(Glu). The sequence is that of Glutamate--tRNA ligase from Borreliella afzelii (strain PKo) (Borrelia afzelii).